We begin with the raw amino-acid sequence, 605 residues long: Elongation factor 4 (605 aa).

The region spanning 4–181 (NKIKTFSIIA…AIVEYVPSPL (178 aa)) is the tr-type G domain. GTP contacts are provided by residues 16–21 (DHGKST) and 128–131 (NKVD).

Belongs to the TRAFAC class translation factor GTPase superfamily. Classic translation factor GTPase family. LepA subfamily.

The protein resides in the cell membrane. The catalysed reaction is GTP + H2O = GDP + phosphate + H(+). Functionally, required for accurate and efficient protein synthesis under certain stress conditions. May act as a fidelity factor of the translation reaction, by catalyzing a one-codon backward translocation of tRNAs on improperly translocated ribosomes. Back-translocation proceeds from a post-translocation (POST) complex to a pre-translocation (PRE) complex, thus giving elongation factor G a second chance to translocate the tRNAs correctly. Binds to ribosomes in a GTP-dependent manner. The polypeptide is Elongation factor 4 (Mycoplasmopsis synoviae (strain 53) (Mycoplasma synoviae)).